The sequence spans 305 residues: UDP-3-O-acyl-N-acetylglucosamine deacetylase (305 aa).

Residues H78, H235, and D239 each coordinate Zn(2+). Residue H262 is the Proton donor of the active site.

This sequence belongs to the LpxC family. Zn(2+) is required as a cofactor.

The catalysed reaction is a UDP-3-O-[(3R)-3-hydroxyacyl]-N-acetyl-alpha-D-glucosamine + H2O = a UDP-3-O-[(3R)-3-hydroxyacyl]-alpha-D-glucosamine + acetate. It functions in the pathway glycolipid biosynthesis; lipid IV(A) biosynthesis; lipid IV(A) from (3R)-3-hydroxytetradecanoyl-[acyl-carrier-protein] and UDP-N-acetyl-alpha-D-glucosamine: step 2/6. Its function is as follows. Catalyzes the hydrolysis of UDP-3-O-myristoyl-N-acetylglucosamine to form UDP-3-O-myristoylglucosamine and acetate, the committed step in lipid A biosynthesis. This chain is UDP-3-O-acyl-N-acetylglucosamine deacetylase, found in Citrifermentans bemidjiense (strain ATCC BAA-1014 / DSM 16622 / JCM 12645 / Bem) (Geobacter bemidjiensis).